We begin with the raw amino-acid sequence, 254 residues long: Hydroxyacylglutathione hydrolase (254 aa).

7 residues coordinate Zn(2+): His53, His55, Asp57, His58, His111, Asp128, and His166.

Belongs to the metallo-beta-lactamase superfamily. Glyoxalase II family. As to quaternary structure, monomer. Zn(2+) is required as a cofactor.

The enzyme catalyses an S-(2-hydroxyacyl)glutathione + H2O = a 2-hydroxy carboxylate + glutathione + H(+). It functions in the pathway secondary metabolite metabolism; methylglyoxal degradation; (R)-lactate from methylglyoxal: step 2/2. Functionally, thiolesterase that catalyzes the hydrolysis of S-D-lactoyl-glutathione to form glutathione and D-lactic acid. This chain is Hydroxyacylglutathione hydrolase, found in Aeromonas salmonicida (strain A449).